The following is a 148-amino-acid chain: Large ribosomal subunit protein bL9 (148 aa).

It belongs to the bacterial ribosomal protein bL9 family.

Its function is as follows. Binds to the 23S rRNA. The sequence is that of Large ribosomal subunit protein bL9 from Bacillus thuringiensis subsp. konkukian (strain 97-27).